Reading from the N-terminus, the 266-residue chain is 3-methyl-2-oxobutanoate hydroxymethyltransferase (266 aa).

Positions 47 and 86 each coordinate Mg(2+). Residues 47–48, Asp86, and Lys114 each bind 3-methyl-2-oxobutanoate; that span reads DS. Residue Glu116 participates in Mg(2+) binding. Glu183 functions as the Proton acceptor in the catalytic mechanism.

This sequence belongs to the PanB family. Homodecamer; pentamer of dimers. Requires Mg(2+) as cofactor.

Its subcellular location is the cytoplasm. The catalysed reaction is 3-methyl-2-oxobutanoate + (6R)-5,10-methylene-5,6,7,8-tetrahydrofolate + H2O = 2-dehydropantoate + (6S)-5,6,7,8-tetrahydrofolate. Its pathway is cofactor biosynthesis; (R)-pantothenate biosynthesis; (R)-pantoate from 3-methyl-2-oxobutanoate: step 1/2. Functionally, catalyzes the reversible reaction in which hydroxymethyl group from 5,10-methylenetetrahydrofolate is transferred onto alpha-ketoisovalerate to form ketopantoate. This is 3-methyl-2-oxobutanoate hydroxymethyltransferase from Idiomarina loihiensis (strain ATCC BAA-735 / DSM 15497 / L2-TR).